The sequence spans 254 residues: Probable derlin-2 homolog (254 aa).

Over 1-17 (MAQPFEDWYKNLPIVTK) the chain is Cytoplasmic. A helical membrane pass occupies residues 18-38 (IYMTGCVVTSVSVYLGLVGPL). At 39–95 (RLYLNFPLVFGKYEFWRLFTNFFFYDEIGMNFFFHMYFLVRHSRLLEESSFRGRSAD) the chain is on the lumenal side. Residues 96 to 116 (YLFMWIFGSFLLLIMDAFLFY) form a helical membrane-spanning segment. Residues 117–118 (TK) lie on the Cytoplasmic side of the membrane. Residues 119 to 139 (IVTKVLFLAPSIAFMVIYVWS) form a helical membrane-spanning segment. Over 140 to 146 (RRNPNMH) the chain is Lumenal. The chain crosses the membrane as a helical span at residues 147-167 (ISFLGLFTFSAPYLPWVILIM). The Cytoplasmic segment spans residues 168-254 (GYLFNHDLTT…FLNEDDLDQQ (87 aa)).

It belongs to the derlin family.

It localises to the endoplasmic reticulum membrane. In terms of biological role, may be involved in the degradation process of specific misfolded endoplasmic reticulum (ER) luminal proteins. May also be involved in endoplasmic reticulum stress-induced pre-emptive quality control, a mechanism that selectively attenuates the translocation of newly synthesized proteins into the endoplasmic reticulum and reroutes them to the cytosol for proteasomal degradation. In Dictyostelium discoideum (Social amoeba), this protein is Probable derlin-2 homolog (derl2).